The sequence spans 476 residues: Adenosylhomocysteinase (476 aa).

Substrate is bound by residues threonine 67, aspartate 142, and glutamate 202. 203–205 (TTT) contacts NAD(+). Residues lysine 232 and aspartate 236 each coordinate substrate. Residues asparagine 237, 266–271 (GYGDVG), glutamate 289, asparagine 324, 345–347 (IGH), and asparagine 390 each bind NAD(+).

It belongs to the adenosylhomocysteinase family. It depends on NAD(+) as a cofactor.

It localises to the cytoplasm. The catalysed reaction is S-adenosyl-L-homocysteine + H2O = L-homocysteine + adenosine. It functions in the pathway amino-acid biosynthesis; L-homocysteine biosynthesis; L-homocysteine from S-adenosyl-L-homocysteine: step 1/1. Functionally, may play a key role in the regulation of the intracellular concentration of adenosylhomocysteine. The sequence is that of Adenosylhomocysteinase from Prochlorococcus marinus (strain SARG / CCMP1375 / SS120).